A 454-amino-acid polypeptide reads, in one-letter code: MLNIMEVHETNQMIEQEKLDVRTITMGISLLDCASDDVDKTCDNIYRKITTYAKDLVSTGKAIERDYGIPIVNKRITVTPISLVGASSCKTSEDFVKIAHALDKAAKEVGVDLIGGYSALVSKSMTPAEELLIRSLPQALSETDIVCSSVNVGSTKTGIDMNAVELLGHIIKDVAERTADNDSYGCVKFVAFCNVPDDNPFMAGGFHGVTEGDAVINVGVSGPGVVSRALDAAKGKDFEFLCETIKRTAFKITRVGQLVAQEASRRLGIPFGIIDLSLAPTPAVGDSVGEVLEKIGLEQVGAPGTTAALAMLNDQVKKGGIMASSYVGGLSGAFIPVSEDKNMIDAASSDCLTIEKLEAMTCVCSVGLDMIAIPGDTSASTISGLIADEAAIGMVNQKTTAVRVIPVAGKGVGEMANFGGLMGYAPIMPVNQTSCEAFVTRGGRIPAPIHSFKN.

The protein belongs to the UPF0210 family. Homodimer.

This is UPF0210 protein BL1209 from Bifidobacterium longum (strain NCC 2705).